Here is a 76-residue protein sequence, read N- to C-terminus: NADH-ubiquinone oxidoreductase chain 4L (76 aa).

3 consecutive transmembrane segments (helical) span residues 1–21, 29–49, and 56–76; these read MTPVHFSFTSAFILGLMGLAF, ALLCLEGMMLSLFIALSLWAL, and YSVAPMLLLAFSACEASAGLA.

Belongs to the complex I subunit 4L family.

The protein localises to the mitochondrion membrane. It carries out the reaction a ubiquinone + NADH + 5 H(+)(in) = a ubiquinol + NAD(+) + 4 H(+)(out). Its function is as follows. Core subunit of the mitochondrial membrane respiratory chain NADH dehydrogenase (Complex I) which catalyzes electron transfer from NADH through the respiratory chain, using ubiquinone as an electron acceptor. Part of the enzyme membrane arm which is embedded in the lipid bilayer and involved in proton translocation. The polypeptide is NADH-ubiquinone oxidoreductase chain 4L (MT-ND4L) (Oncorhynchus masou (Cherry salmon)).